The sequence spans 342 residues: UDP-3-O-acylglucosamine N-acyltransferase (342 aa).

H234 functions as the Proton acceptor in the catalytic mechanism.

The protein belongs to the transferase hexapeptide repeat family. LpxD subfamily. In terms of assembly, homotrimer.

The catalysed reaction is a UDP-3-O-[(3R)-3-hydroxyacyl]-alpha-D-glucosamine + a (3R)-hydroxyacyl-[ACP] = a UDP-2-N,3-O-bis[(3R)-3-hydroxyacyl]-alpha-D-glucosamine + holo-[ACP] + H(+). The protein operates within bacterial outer membrane biogenesis; LPS lipid A biosynthesis. Catalyzes the N-acylation of UDP-3-O-acylglucosamine using 3-hydroxyacyl-ACP as the acyl donor. Is involved in the biosynthesis of lipid A, a phosphorylated glycolipid that anchors the lipopolysaccharide to the outer membrane of the cell. The polypeptide is UDP-3-O-acylglucosamine N-acyltransferase (Oleidesulfovibrio alaskensis (strain ATCC BAA-1058 / DSM 17464 / G20) (Desulfovibrio alaskensis)).